We begin with the raw amino-acid sequence, 279 residues long: Acetylglutamate kinase (279 aa).

Substrate is bound by residues 64-65 (GG), R86, and N177.

This sequence belongs to the acetylglutamate kinase family. ArgB subfamily.

The protein resides in the cytoplasm. The enzyme catalyses N-acetyl-L-glutamate + ATP = N-acetyl-L-glutamyl 5-phosphate + ADP. The protein operates within amino-acid biosynthesis; L-arginine biosynthesis; N(2)-acetyl-L-ornithine from L-glutamate: step 2/4. Catalyzes the ATP-dependent phosphorylation of N-acetyl-L-glutamate. The sequence is that of Acetylglutamate kinase from Campylobacter jejuni (strain RM1221).